The following is a 361-amino-acid chain: tRNA/tmRNA (uracil-C(5))-methyltransferase (361 aa).

S-adenosyl-L-methionine is bound by residues Gln-183, Tyr-211, Asn-216, Glu-232, and Asp-294. Residue Cys-319 is the Nucleophile of the active site. The active-site Proton acceptor is Glu-353.

Belongs to the class I-like SAM-binding methyltransferase superfamily. RNA M5U methyltransferase family. TrmA subfamily.

The catalysed reaction is uridine(54) in tRNA + S-adenosyl-L-methionine = 5-methyluridine(54) in tRNA + S-adenosyl-L-homocysteine + H(+). It carries out the reaction uridine(341) in tmRNA + S-adenosyl-L-methionine = 5-methyluridine(341) in tmRNA + S-adenosyl-L-homocysteine + H(+). Functionally, dual-specificity methyltransferase that catalyzes the formation of 5-methyluridine at position 54 (m5U54) in all tRNAs, and that of position 341 (m5U341) in tmRNA (transfer-mRNA). This chain is tRNA/tmRNA (uracil-C(5))-methyltransferase, found in Acinetobacter baumannii (strain AB307-0294).